Consider the following 805-residue polypeptide: Angiotensin-converting enzyme 2 (805 aa).

Positions 1 to 17 (MSSSSWLLLSLVAVTAA) are cleaved as a signal peptide. Residues 18 to 740 (QSTIEEQAKT…LGPPNQPPVS (723 aa)) lie on the Extracellular side of the membrane. Residues 19 to 607 (STIEEQAKTF…QNKNSFVGWS (589 aa)) enclose the Peptidase M2 domain. An interaction with SARS-CoV spike glycoprotein region spans residues 30–41 (DKFNHEAEDLFY). The N-linked (GlcNAc...) asparagine glycan is linked to asparagine 53. Residues 82–84 (MYP) form an interaction with SARS-CoV spike glycoprotein region. N-linked (GlcNAc...) asparagine glycans are attached at residues asparagine 90 and asparagine 103. A disulfide bridge connects residues cysteine 133 and cysteine 141. Position 169 (arginine 169) interacts with chloride. Arginine 273 is a binding site for substrate. The N-linked (GlcNAc...) asparagine glycan is linked to asparagine 322. Cysteine 344 and cysteine 361 form a disulfide bridge. Substrate is bound at residue 345 to 346 (HP). The segment at 353 to 357 (KGDFR) is interaction with SARS-CoV spike glycoprotein. A Zn(2+)-binding site is contributed by histidine 374. Catalysis depends on glutamate 375, which acts as the Proton acceptor. The Zn(2+) site is built by histidine 378 and glutamate 402. An N-linked (GlcNAc...) asparagine glycan is attached at asparagine 432. Chloride-binding residues include tryptophan 477 and lysine 481. The active-site Proton donor is the histidine 505. Tyrosine 515 is a substrate binding site. A disulfide bond links cysteine 530 and cysteine 542. Residue asparagine 546 is glycosylated (N-linked (GlcNAc...) asparagine). A Collectrin-like domain is found at 614-805 (ADQSIKVRIS…QNTDDVQTSF (192 aa)). Residues 652–659 (RQYFLKVK) form an essential for cleavage by ADAM17 region. Asparagine 690 carries N-linked (GlcNAc...) asparagine glycosylation. Positions 697 to 716 (RTEVEKAIRMSRSRINDAFR) are essential for cleavage by TMPRSS11D and TMPRSS2. A helical membrane pass occupies residues 741–761 (IWLIVFGVVMGVIVVGIVILI). Topologically, residues 762 to 805 (FTGIRDRKKKNKARSGENPYASIDISKGENNPGFQNTDDVQTSF) are cytoplasmic. Residues 772-805 (NKARSGENPYASIDISKGENNPGFQNTDDVQTSF) form a disordered region. The LIR motif lies at 778–786 (ENPYASIDI). Tyrosine 781 is subject to Phosphotyrosine. Positions 781–784 (YASI) match the Endocytic sorting signal motif. The SH2-binding signature appears at 781–785 (YASID). Position 783 is a phosphoserine (serine 783). Lysine 788 participates in a covalent cross-link: Glycyl lysine isopeptide (Lys-Gly) (interchain with G-Cter in ubiquitin). Over residues 789–805 (GENNPGFQNTDDVQTSF) the composition is skewed to polar residues. The short motif at 792–795 (NPGF) is the PTB element. The PDZ-binding signature appears at 803-805 (TSF).

This sequence belongs to the peptidase M2 family. Homodimer. Interacts with the catalytically active form of TMPRSS2. Interacts with SLC6A19; this interaction is essential for expression and function of SLC6A19 in intestine. Interacts with ITGA5:ITGB1. Probably interacts (via endocytic sorting signal motif) with AP2M1; the interaction is inhibited by phosphorylation of Tyr-781. Interacts (via PDZ-binding motif) with NHERF1 (via PDZ domains); the interaction may enhance ACE2 membrane residence. As to quaternary structure, (Microbial infection) Interacts with SARS coronavirus/SARS-CoV spike protein. In terms of assembly, (Microbial infection) Interacts with SARS coronavirus-2/SARS-CoV-2 spike protein (via RBD domain). (Microbial infection) Interacts with human coronavirus NL63 spike protein. As to quaternary structure, (Microbial infection) Interacts with human coronavirus NL63/HCoV-NL63 spike glycoprotein. In terms of assembly, (Microbial infection) Interacts with SARS coronavirus-2/SARS-CoV-2 spike protein; the interaction is increased by AVP/Arg-vasopressin with which they may form a complex. It depends on Zn(2+) as a cofactor. The cofactor is chloride. N-glycosylation on Asn-90 may limit SARS infectivity. In terms of processing, proteolytic cleavage by ADAM17 generates a secreted form. Also cleaved by serine proteases: TMPRSS2, TMPRSS11D and HPN/TMPRSS1. Post-translationally, phosphorylated. Phosphorylation at Tyr-781 probably inhibits interaction with AP2M1 and enables interactions with proteins containing SH2 domains. Ubiquitinated. Ubiquitinated on Lys-788 via 'Lys-48'-linked ubiquitin. 'Lys-48'-linked deubiquitinated by USP50 on the Lys-788; leading to its stabilization. Expressed in endothelial cells from small and large arteries, and in arterial smooth muscle cells (at protein level). Expressed in enterocytes of the small intestine, Leydig cells and Sertoli cells (at protein level). Expressed in the renal proximal tubule and the small intestine (at protein level). Expressed in heart, kidney, testis, and gastrointestinal system (at protein level). In lung, expressed at low levels in some alveolar type 2 cells, the expression seems to be individual-specific (at protein level). Expressed in nasal epithelial cells (at protein level). Coexpressed with TMPRSS2 within some lung alveolar type 2 cells, ileal absorptive enterocytes, intestinal epithelial cells, cornea, gallbladder and nasal goblet secretory cells. Coexpressed with TMPRSS4 within mature enterocytes. In terms of tissue distribution, expressed in nasal and bronchial epithelial cells (at protein level).

The protein resides in the secreted. It is found in the cell membrane. The protein localises to the cytoplasm. It localises to the cell projection. Its subcellular location is the cilium. The protein resides in the apical cell membrane. The catalysed reaction is angiotensin II + H2O = angiotensin-(1-7) + L-phenylalanine. It catalyses the reaction angiotensin I + H2O = angiotensin-(1-9) + L-leucine. It carries out the reaction bradykinin(1-8) + H2O = bradykinin(1-7) + L-phenylalanine. The enzyme catalyses neurotensin + H2O = neurotensin-(1-12) + L-leucine. The catalysed reaction is neurotensin-(1-8) + H2O = neurotensin-(1-7) + L-arginine. It catalyses the reaction kinetensin + H2O = kinetensin-(1-8) + L-leucine. It carries out the reaction dynorphin A-(1-13) + H2O = dynorphin A-(1-12) + L-lysine. The enzyme catalyses apelin-13 + H2O = apelin-12 + L-phenylalanine. The catalysed reaction is [Pyr1]apelin-13 + H2O = [Pyr1]apelin-12 + L-phenylalanine. It catalyses the reaction apelin-17 + H2O = apelin-16 + L-phenylalanine. It carries out the reaction beta-casomorphin-7 + H2O = beta-casomorphin-6 + L-isoleucine. The enzyme catalyses neocasomorphin + H2O = neocasomorphin-(1-5) + L-isoleucine. Regulated by chloride and fluoride, but not bromide. Chloride increases angiotensin I and decreases angiotensin II cleavage. Inhibited by MLN-4760, cFP_Leu, and EDTA, but not by the ACE inhibitors lisinopril, captopril and enalaprilat. Highly potent and selective in vitro ACE2 inhibitors were identified. In terms of biological role, essential counter-regulatory carboxypeptidase of the renin-angiotensin hormone system that is a critical regulator of blood volume, systemic vascular resistance, and thus cardiovascular homeostasis. Converts angiotensin I to angiotensin 1-9, a nine-amino acid peptide with anti-hypertrophic effects in cardiomyocytes, and angiotensin II to angiotensin 1-7, which then acts as a beneficial vasodilator and anti-proliferation agent, counterbalancing the actions of the vasoconstrictor angiotensin II. Also removes the C-terminal residue from three other vasoactive peptides, neurotensin, kinetensin, and des-Arg bradykinin, but is not active on bradykinin. Also cleaves other biological peptides, such as apelins (apelin-13, [Pyr1]apelin-13, apelin-17, apelin-36), casomorphins (beta-casomorphin-7, neocasomorphin) and dynorphin A with high efficiency. In addition, ACE2 C-terminus is homologous to collectrin and is responsible for the trafficking of the neutral amino acid transporter SL6A19 to the plasma membrane of gut epithelial cells via direct interaction, regulating its expression on the cell surface and its catalytic activity. Its function is as follows. (Microbial infection) Acts as a receptor for human coronaviruses SARS-CoV and SARS-CoV-2, as well as human coronavirus NL63/HCoV-NL63. Non-functional as a carboxypeptidase. Functionally, (Microbial infection) Non-functional as a receptor for human coronavirus SARS-CoV-2. The sequence is that of Angiotensin-converting enzyme 2 from Homo sapiens (Human).